Consider the following 91-residue polypeptide: Sec-independent protein translocase protein TatA (91 aa).

A helical membrane pass occupies residues 1-21 (MGAMQPMHWLIVAVVVVILFG).

It belongs to the TatA/E family. The Tat system comprises two distinct complexes: a TatABC complex, containing multiple copies of TatA, TatB and TatC subunits, and a separate TatA complex, containing only TatA subunits. Substrates initially bind to the TatABC complex, which probably triggers association of the separate TatA complex to form the active translocon.

The protein localises to the cell membrane. Functionally, part of the twin-arginine translocation (Tat) system that transports large folded proteins containing a characteristic twin-arginine motif in their signal peptide across membranes. TatA could form the protein-conducting channel of the Tat system. The sequence is that of Sec-independent protein translocase protein TatA from Rhodococcus erythropolis (strain PR4 / NBRC 100887).